The following is a 749-amino-acid chain: Semaphorin-3B (749 aa).

Residues 1–24 (MGRAGAAAVIPGLALLWAVGLGSA) form the signal peptide. The Sema domain maps to 30 to 513 (RLRLSFQELQ…SRSAVAQIAL (484 aa)). A glycan (N-linked (GlcNAc...) asparagine) is linked at Asn-82. A disulfide bond links Cys-102 and Cys-113. Asn-124 carries an N-linked (GlcNAc...) asparagine glycan. Intrachain disulfides connect Cys-131–Cys-140, Cys-269–Cys-380, and Cys-293–Cys-340. N-linked (GlcNAc...) asparagine glycosylation occurs at Asn-427. Intrachain disulfides connect Cys-516–Cys-534 and Cys-644–Cys-710. The Ig-like C2-type domain occupies 573 to 659 (PALLEHKVFG…GFTQPLRRLS (87 aa)). Positions 702–749 (GSANSLRMCRPQPALQSLPLESRRKGRNRRTHAPEPRAERGPRSATHW) are disordered. Positions 733–743 (HAPEPRAERGP) are enriched in basic and acidic residues.

This sequence belongs to the semaphorin family. As to expression, expressed abundantly but differentially in a variety of neural and nonneural tissues.

The protein resides in the secreted. It is found in the endoplasmic reticulum. Inhibits axonal extension by providing local signals to specify territories inaccessible for growing axons. In Homo sapiens (Human), this protein is Semaphorin-3B (SEMA3B).